The chain runs to 601 residues: Mitochondrial tRNA methylthiotransferase CDK5RAP1 (601 aa).

The transit peptide at 1–33 (MHPLQCVLQVQRSLGWGPLASVSWLSLRMCRAH) directs the protein to the mitochondrion. The 121-residue stretch at 100–220 (RKVYLETYGC…LPRLLAVAES (121 aa)) folds into the MTTase N-terminal domain. Residues cysteine 109, cysteine 145, cysteine 183, cysteine 258, cysteine 262, and cysteine 265 each coordinate [4Fe-4S] cluster. The 269-residue stretch at 244-512 (SASATSAFVS…ITIFREEATK (269 aa)) folds into the Radical SAM core domain. A TRAM domain is found at 515-590 (QTSVGCTQLV…SQTLRGHVLC (76 aa)).

It belongs to the methylthiotransferase family. MiaB subfamily. As to quaternary structure, interacts with CDK5R1 (p35 form). CDK5RAP1, CDK5RAP2 and CDK5RAP3 show competitive binding to CDK5R1. Forms a complex with CDK5R1 and CDK5. [4Fe-4S] cluster serves as cofactor. Expressed in heart, brain, placenta, lung, liver, skeletal muscle, kidney and pancreas. Expressed in neurons of central nervous tissue. In terms of tissue distribution, mainly expressed in brain, placenta and testis. As to expression, high expression in placenta and lung.

The protein localises to the mitochondrion. It catalyses the reaction N(6)-dimethylallyladenosine(37) in tRNA + (sulfur carrier)-SH + AH2 + 2 S-adenosyl-L-methionine = 2-methylsulfanyl-N(6)-dimethylallyladenosine(37) in tRNA + (sulfur carrier)-H + 5'-deoxyadenosine + L-methionine + A + S-adenosyl-L-homocysteine + 2 H(+). In terms of biological role, methylthiotransferase that catalyzes the conversion of N6-(dimethylallyl)adenosine (i(6)A) to 2-methylthio-N6-(dimethylallyl)adenosine (ms(2)i(6)A) at position 37 (adjacent to the 3'-end of the anticodon) of four mitochondrial DNA-encoded tRNAs (Ser(UCN), Phe, Tyr and Trp). Essential for efficient and highly accurate protein translation by the ribosome. Specifically inhibits CDK5 activation by CDK5R1. Essential for efficient mitochondrial protein synthesis and respiratory chain; shows pathological consequences in mitochondrial disease. This is Mitochondrial tRNA methylthiotransferase CDK5RAP1 from Homo sapiens (Human).